Reading from the N-terminus, the 121-residue chain is Phosphoribosyl-ATP pyrophosphatase (121 aa).

This sequence belongs to the PRA-PH family.

The protein resides in the cytoplasm. It catalyses the reaction 1-(5-phospho-beta-D-ribosyl)-ATP + H2O = 1-(5-phospho-beta-D-ribosyl)-5'-AMP + diphosphate + H(+). It participates in amino-acid biosynthesis; L-histidine biosynthesis; L-histidine from 5-phospho-alpha-D-ribose 1-diphosphate: step 2/9. This is Phosphoribosyl-ATP pyrophosphatase from Nitrosospira multiformis (strain ATCC 25196 / NCIMB 11849 / C 71).